The primary structure comprises 457 residues: Ribosome biogenesis protein YTM1 (457 aa).

Positions 8 to 89 are ubiquitin-like (UBL) domain; sequence VKVKFFTREK…ETTLTVEYTR (82 aa). Positions 99 to 457 are sufficient for interaction with ERB1 and association with 66S pre-ribosomes; sequence NFNNDDWVSA…INKGDNIFKN (359 aa). WD repeat units lie at residues 101-140, 142-180, 203-241, 282-322, 324-363, 370-410, and 421-457; these read NNDD…EKQY, GHTG…GSVS, GHKA…MTAI, SHTG…CIDT, TTSY…SAKI, GHKN…PMYT, and GVND…IFKN. The interval 172 to 191 is disordered; that stretch reads TKNDDGSVSNNTGDENDEEN.

Belongs to the WD repeat WDR12/YTM1 family. As to quaternary structure, component of the NOP7 complex, composed of ERB1, NOP7 and YTM1. The complex is held together by ERB1, which interacts with NOP7 via its N-terminal domain and with YTM1 via a high-affinity interaction between the seven-bladed beta-propeller domains of the 2 proteins. The NOP7 complex associates with the 66S pre-ribosome. Interacts (via UBL domain) with MDN1 (via VWFA/MIDAS domain).

It is found in the nucleus. The protein resides in the nucleolus. It localises to the nucleoplasm. In terms of biological role, component of the NOP7 complex, which is required for maturation of the 25S and 5.8S ribosomal RNAs and formation of the 60S ribosome. This Candida glabrata (strain ATCC 2001 / BCRC 20586 / JCM 3761 / NBRC 0622 / NRRL Y-65 / CBS 138) (Yeast) protein is Ribosome biogenesis protein YTM1.